Here is a 419-residue protein sequence, read N- to C-terminus: uncharacterized protein (419 aa).

Helical transmembrane passes span 5–25 (MIIV…ALII), 26–46 (AAGV…AQQI), 53–73 (FPML…GGEL), 102–122 (VFGG…SVLI), 144–164 (VIDV…VSGV), 170–190 (FVAG…VCWF), 210–230 (ATLA…ILFL), 234–254 (LATP…LSLL), 274–294 (ATGV…VLTF), 309–329 (ISSP…VGMP), 332–352 (MPPA…TIGL), 360–380 (MMVI…TLFI), and 396–416 (LWPF…IPAL).

This sequence belongs to the YiaN/YgiK family.

The protein resides in the cell inner membrane. This is an uncharacterized protein from Sinorhizobium fredii (strain NBRC 101917 / NGR234).